A 389-amino-acid polypeptide reads, in one-letter code: uncharacterized protein (389 aa).

Residues 1–12 (MVHATSQSASTE) show a composition bias toward polar residues. Disordered stretches follow at residues 1 to 49 (MVHA…DEDL) and 86 to 111 (HKSMGSTRGKKKRGKTAKKAKKANRA). Acidic residues predominate over residues 40–49 (ESGDEYDEDL). Over residues 93–110 (RGKKKRGKTAKKAKKANR) the composition is skewed to basic residues.

This is an uncharacterized protein from Caenorhabditis elegans.